Consider the following 864-residue polypeptide: Mitochondrial 15S rRNA processing factor CCM1 (864 aa).

The N-terminal 76 residues, 1-76 (MYMARCGPKN…REFSNTLKER (76 aa)), are a transit peptide targeting the mitochondrion. PPR repeat units lie at residues 319–353 (NKQN…STKH) and 356–390 (DICT…NIKP).

It belongs to the CCM1 family. As to quaternary structure, binds to mitochondrial small subunit 15S rRNA.

The protein resides in the mitochondrion. In terms of biological role, regulates mitochondrial small subunit maturation by controlling 15S rRNA 5'-end processing. Localizes to the 5' precursor of the 15S rRNA in a position that is subsequently occupied by mS47 in the mature yeast mtSSU. Uses structure and sequence-specific RNA recognition, binding to a single-stranded region of the precursor and specifically recognizing bases -6 to -1. The exchange of Ccm1 for mS47 is coupled to the irreversible removal of precursor rRNA that is accompanied by conformational changes of the mitoribosomal proteins uS5m and mS26. These conformational changes signal completion of 5'-end rRNA processing through protection of the mature 5'-end of the 15S rRNA and stabilization of mS47. The removal of the 5' precursor together with the dissociation of Ccm1 may be catalyzed by the 5'-3' exoribonuclease Pet127. Involved in the specific removal of group I introns in mitochondrial encoded transcripts. In Saccharomyces cerevisiae (strain Lalvin EC1118 / Prise de mousse) (Baker's yeast), this protein is Mitochondrial 15S rRNA processing factor CCM1 (CCM1).